We begin with the raw amino-acid sequence, 362 residues long: MNTPKVNILYSPGQAAQLSRTLISTCHTRPFLLGGLRVATSLHPTQTNLSSSPPRGFTTTSVVRLKDFFPAKETAYIRQTPPAWPHHGWTEEEMISVVPEHRKPETVGDWLAWKLVRICRWGTDIATGIRPEQQVDKNHPTTATSADKPLTEAQWLVRFIFLESIAGVPGMVAGMLRHLHSLRRLKRDNGWIETLLEESYNERMHLLTFMKMCEPGLLMKTLILGAQGVFFNAMFLSYLVSPKITHRFVGYLEEEAVHTYTRCIREIEEGHLPKWSDERFEIPEMAVRYWRMPEGKRTMKDLIYYIRADEAVHRGVNHTLSNLDQKEDPNPFVNDYKEGEGGRRPVNPALKPTGFERAEVIR.

Residues 1–64 (MNTPKVNILY…RGFTTTSVVR (64 aa)) constitute a mitochondrion transit peptide. A helical transmembrane segment spans residues 156–176 (LVRFIFLESIAGVPGMVAGML). Fe cation contacts are provided by glutamate 163, glutamate 202, and histidine 205. Residues 222–242 (LILGAQGVFFNAMFLSYLVSP) form a helical membrane-spanning segment. Fe cation is bound by residues glutamate 253, glutamate 310, and histidine 313.

This sequence belongs to the alternative oxidase family. It depends on Fe cation as a cofactor.

The protein resides in the mitochondrion inner membrane. In terms of biological role, catalyzes cyanide-resistant oxygen consumption. May increase respiration when the cytochrome respiratory pathway is restricted, or in response to low temperatures. In Gelasinospora sp. (strain S23), this protein is Alternative oxidase, mitochondrial (aod-1).